A 48-amino-acid chain; its full sequence is MAKYRCGKCWKELDDDQLKTLPGVRCPYCGYRIIYMVRKPTVKIVKAI.

Residues Cys6, Cys9, Cys26, and Cys29 each contribute to the Zn(2+) site.

The protein belongs to the archaeal Rpo12/eukaryotic RPC10 RNA polymerase subunit family. In terms of assembly, part of the 13-subunit RNA polymerase. The cofactor is Zn(2+).

Its subcellular location is the cytoplasm. It catalyses the reaction RNA(n) + a ribonucleoside 5'-triphosphate = RNA(n+1) + diphosphate. DNA-dependent RNA polymerase (RNAP) catalyzes the transcription of DNA into RNA using the four ribonucleoside triphosphates as substrates. This Sulfolobus acidocaldarius (strain ATCC 33909 / DSM 639 / JCM 8929 / NBRC 15157 / NCIMB 11770) protein is DNA-directed RNA polymerase subunit Rpo12.